The following is a 382-amino-acid chain: Two-component response regulator ARR14 (382 aa).

A Response regulatory domain is found at 12 to 128 (RILVVDDDTS…ELKNIWQHVV (117 aa)). Residue D63 is modified to 4-aspartylphosphate. Basic residues predominate over residues 171 to 181 (CRNKKKKKKRS). The tract at residues 171–193 (CRNKKKKKKRSVDRDDNEDDLLL) is disordered. Residues 199–202 (KKSR) carry the Nuclear localization signal motif. The myb-like GARP DNA-binding region spans 202–252 (RVVWSIELHQQFVNAVNKLGIDKAVPKRILELMNVPGLSRENVASHLQKFR).

It belongs to the ARR family. Type-B subfamily. In terms of assembly, binds the target DNA as a monomer. Two-component system major event consists of a His-to-Asp phosphorelay between a sensor histidine kinase (HK) and a response regulator (RR). In plants, the His-to-Asp phosphorelay involves an additional intermediate named Histidine-containing phosphotransfer protein (HPt). This multistep phosphorelay consists of a His-Asp-His-Asp sequential transfer of a phosphate group between first a His and an Asp of the HK protein, followed by the transfer to a conserved His of the HPt protein and finally the transfer to an Asp in the receiver domain of the RR protein. Predominantly expressed in young leaf tissue.

The protein localises to the nucleus. In terms of biological role, transcriptional activator that binds specifically to the DNA sequence 5'-[AG]GATT-3'. Functions as a response regulator involved in His-to-Asp phosphorelay signal transduction system. Phosphorylation of the Asp residue in the receiver domain activates the ability of the protein to promote the transcription of target genes. Could directly activate some type-A response regulators in response to cytokinins. This Arabidopsis thaliana (Mouse-ear cress) protein is Two-component response regulator ARR14 (ARR14).